An 863-amino-acid chain; its full sequence is Ubiquitin carboxyl-terminal hydrolase 13 (863 aa).

A Phosphoserine modification is found at Ser114. The residue at position 122 (Thr122) is a Phosphothreonine. The segment at 187 to 295 adopts a UBP-type; degenerate zinc-finger fold; sequence PVSKYANNLT…KHLAHFGIDM (109 aa). Positions 211, 214, 231, and 244 each coordinate Zn(2+). Residue Lys311 forms a Glycyl lysine isopeptide (Lys-Gly) (interchain with G-Cter in SUMO2) linkage. A USP domain is found at 336 to 861; the sequence is TGLKNLGNSC…LGYMYFYRRI (526 aa). The Nucleophile role is filled by Cys345. A Glycyl lysine isopeptide (Lys-Gly) (interchain with G-Cter in SUMO2) cross-link involves residue Lys405. 2 consecutive UBA domains span residues 652–693 and 727–767; these read DIDE…IVVH and QPPE…IFSH. The active-site Proton acceptor is His823.

The protein belongs to the peptidase C19 family. Interacts with UFD1. Interacts (via UBA domains) with SIAH2 (when ubiquitinated). Interacts with BAG6; the interaction is direct and may mediate UBL4A deubiquitination. Interacts (via UBA 2 domain) with AMFR; the interaction is direct. Interacts with UBL4A; may be indirect via BAG6. Interacts with NEDD4.

Its subcellular location is the cytoplasm. The enzyme catalyses Thiol-dependent hydrolysis of ester, thioester, amide, peptide and isopeptide bonds formed by the C-terminal Gly of ubiquitin (a 76-residue protein attached to proteins as an intracellular targeting signal).. Its activity is regulated as follows. Specifically inhibited by spautin-1 (specific and potent autophagy inhibitor-1), a derivative of MBCQ that binds to USP13 and inhibits deubiquitinase activity. Regulated by PIK3C3/VPS34-containing complexes. The weak deubiquitinase activity in vitro suggests the existence of some mechanism that activates the enzyme. Its function is as follows. Deubiquitinase that mediates deubiquitination of target proteins such as BECN1, MITF, SKP2 and USP10 and is involved in various processes such as autophagy, endoplasmic reticulum-associated degradation (ERAD), cell cycle progression or DNA damage response. Component of a regulatory loop that controls autophagy and p53/TP53 levels: mediates deubiquitination of BECN1, a key regulator of autophagy, leading to stabilize the PIK3C3/VPS34-containing complexes. Alternatively, forms with NEDD4 a deubiquitination complex, which subsequently stabilizes VPS34 to promote autophagy. Also deubiquitinates USP10, an essential regulator of p53/TP53 stability. In turn, PIK3C3/VPS34-containing complexes regulate USP13 stability, suggesting the existence of a regulatory system by which PIK3C3/VPS34-containing complexes regulate p53/TP53 protein levels via USP10 and USP13. Recruited by nuclear UFD1 and mediates deubiquitination of SKP2, thereby regulating endoplasmic reticulum-associated degradation (ERAD). Also regulates ERAD through the deubiquitination of UBL4A a component of the BAG6/BAT3 complex. Mediates stabilization of SIAH2 independently of deubiquitinase activity: binds ubiquitinated SIAH2 and acts by impairing SIAH2 autoubiquitination. Regulates the cell cycle progression by stabilizing cell cycle proteins such as SKP2 and AURKB. In addition, plays an important role in maintaining genomic stability and in DNA replication checkpoint activation via regulation of RAP80 and TOPBP1. Deubiquitinates the multifunctional protein HMGB1 and subsequently drives its nucleocytoplasmic localization and its secretion. Positively regulates type I and type II interferon signalings by deubiquitinating STAT1 but negatively regulates antiviral response by deubiquitinating STING1. The chain is Ubiquitin carboxyl-terminal hydrolase 13 (USP13) from Bos taurus (Bovine).